The chain runs to 266 residues: Undecaprenyl-diphosphatase (266 aa).

The next 8 helical transmembrane spans lie at Met-1–Ile-21, Gln-39–Phe-59, Trp-87–Ile-107, Thr-113–Ala-133, Gly-143–Gly-163, Phe-187–Leu-207, Ala-218–Leu-238, and Ile-244–Val-264.

Belongs to the UppP family.

The protein resides in the cell inner membrane. It catalyses the reaction di-trans,octa-cis-undecaprenyl diphosphate + H2O = di-trans,octa-cis-undecaprenyl phosphate + phosphate + H(+). Functionally, catalyzes the dephosphorylation of undecaprenyl diphosphate (UPP). Confers resistance to bacitracin. The polypeptide is Undecaprenyl-diphosphatase (Alteromonas mediterranea (strain DSM 17117 / CIP 110805 / LMG 28347 / Deep ecotype)).